Here is a 309-residue protein sequence, read N- to C-terminus: Aspartate carbamoyltransferase catalytic subunit (309 aa).

Residues Arg-57 and Thr-58 each coordinate carbamoyl phosphate. Residue Lys-86 participates in L-aspartate binding. Arg-107, His-135, and Gln-138 together coordinate carbamoyl phosphate. Residues Arg-168 and Arg-229 each contribute to the L-aspartate site. Residues Leu-269 and Pro-270 each coordinate carbamoyl phosphate.

It belongs to the aspartate/ornithine carbamoyltransferase superfamily. ATCase family. Heterooligomer of catalytic and regulatory chains.

It catalyses the reaction carbamoyl phosphate + L-aspartate = N-carbamoyl-L-aspartate + phosphate + H(+). The protein operates within pyrimidine metabolism; UMP biosynthesis via de novo pathway; (S)-dihydroorotate from bicarbonate: step 2/3. Catalyzes the condensation of carbamoyl phosphate and aspartate to form carbamoyl aspartate and inorganic phosphate, the committed step in the de novo pyrimidine nucleotide biosynthesis pathway. In Methanopyrus kandleri (strain AV19 / DSM 6324 / JCM 9639 / NBRC 100938), this protein is Aspartate carbamoyltransferase catalytic subunit.